The sequence spans 135 residues: Fluoride-specific ion channel FluC 2 (135 aa).

4 helical membrane-spanning segments follow: residues 5–25 (VLAA…GLLA), 36–56 (WGTV…METL), 68–88 (PFLG…ITDA), and 100–120 (ALLA…AAAG). Residues glycine 76 and threonine 79 each coordinate Na(+).

Belongs to the fluoride channel Fluc/FEX (TC 1.A.43) family.

Its subcellular location is the cell membrane. It carries out the reaction fluoride(in) = fluoride(out). Its activity is regulated as follows. Na(+) is not transported, but it plays an essential structural role and its presence is essential for fluoride channel function. Functionally, fluoride-specific ion channel. Important for reducing fluoride concentration in the cell, thus reducing its toxicity. This is Fluoride-specific ion channel FluC 2 from Thermobifida fusca (strain YX).